A 294-amino-acid polypeptide reads, in one-letter code: N-acetylmuramic acid 6-phosphate etherase (294 aa).

The SIS domain maps to 54–217; that stretch reads VIASFRKGGR…STTSMIGVGK (164 aa). Glu-82 acts as the Proton donor in catalysis. The active site involves Glu-113.

This sequence belongs to the GCKR-like family. MurNAc-6-P etherase subfamily. In terms of assembly, homodimer.

It carries out the reaction N-acetyl-D-muramate 6-phosphate + H2O = N-acetyl-D-glucosamine 6-phosphate + (R)-lactate. The protein operates within amino-sugar metabolism; N-acetylmuramate degradation. Its function is as follows. Specifically catalyzes the cleavage of the D-lactyl ether substituent of MurNAc 6-phosphate, producing GlcNAc 6-phosphate and D-lactate. The chain is N-acetylmuramic acid 6-phosphate etherase from Exiguobacterium sp. (strain ATCC BAA-1283 / AT1b).